Here is a 318-residue protein sequence, read N- to C-terminus: 4-hydroxy-3-methylbut-2-enyl diphosphate reductase (318 aa).

Residue C12 coordinates [4Fe-4S] cluster. (2E)-4-hydroxy-3-methylbut-2-enyl diphosphate is bound by residues H41 and H74. The dimethylallyl diphosphate site is built by H41 and H74. 2 residues coordinate isopentenyl diphosphate: H41 and H74. C96 contacts [4Fe-4S] cluster. (2E)-4-hydroxy-3-methylbut-2-enyl diphosphate is bound at residue H124. Position 124 (H124) interacts with dimethylallyl diphosphate. An isopentenyl diphosphate-binding site is contributed by H124. E126 functions as the Proton donor in the catalytic mechanism. T168 serves as a coordination point for (2E)-4-hydroxy-3-methylbut-2-enyl diphosphate. [4Fe-4S] cluster is bound at residue C198. S226, S227, N228, and S270 together coordinate (2E)-4-hydroxy-3-methylbut-2-enyl diphosphate. Positions 226, 227, 228, and 270 each coordinate dimethylallyl diphosphate. Residues S226, S227, N228, and S270 each coordinate isopentenyl diphosphate.

This sequence belongs to the IspH family. [4Fe-4S] cluster is required as a cofactor.

The catalysed reaction is isopentenyl diphosphate + 2 oxidized [2Fe-2S]-[ferredoxin] + H2O = (2E)-4-hydroxy-3-methylbut-2-enyl diphosphate + 2 reduced [2Fe-2S]-[ferredoxin] + 2 H(+). It carries out the reaction dimethylallyl diphosphate + 2 oxidized [2Fe-2S]-[ferredoxin] + H2O = (2E)-4-hydroxy-3-methylbut-2-enyl diphosphate + 2 reduced [2Fe-2S]-[ferredoxin] + 2 H(+). It functions in the pathway isoprenoid biosynthesis; dimethylallyl diphosphate biosynthesis; dimethylallyl diphosphate from (2E)-4-hydroxy-3-methylbutenyl diphosphate: step 1/1. It participates in isoprenoid biosynthesis; isopentenyl diphosphate biosynthesis via DXP pathway; isopentenyl diphosphate from 1-deoxy-D-xylulose 5-phosphate: step 6/6. Functionally, catalyzes the conversion of 1-hydroxy-2-methyl-2-(E)-butenyl 4-diphosphate (HMBPP) into a mixture of isopentenyl diphosphate (IPP) and dimethylallyl diphosphate (DMAPP). Acts in the terminal step of the DOXP/MEP pathway for isoprenoid precursor biosynthesis. This is 4-hydroxy-3-methylbut-2-enyl diphosphate reductase from Psychrobacter arcticus (strain DSM 17307 / VKM B-2377 / 273-4).